Reading from the N-terminus, the 447-residue chain is Argininosuccinate synthase (447 aa).

ATP is bound by residues 17-25 (AFSGGLDTS) and A43. Y99 serves as a coordination point for L-citrulline. ATP contacts are provided by G129 and T131. L-aspartate is bound by residues T131, N135, and D136. N135 lines the L-citrulline pocket. D136 contributes to the ATP binding site. L-citrulline-binding residues include R139 and S192. D194 contributes to the ATP binding site. L-citrulline-binding residues include T201, E203, and E280.

Belongs to the argininosuccinate synthase family. Type 2 subfamily. As to quaternary structure, homotetramer.

It is found in the cytoplasm. It catalyses the reaction L-citrulline + L-aspartate + ATP = 2-(N(omega)-L-arginino)succinate + AMP + diphosphate + H(+). It participates in amino-acid biosynthesis; L-arginine biosynthesis; L-arginine from L-ornithine and carbamoyl phosphate: step 2/3. This is Argininosuccinate synthase from Shigella dysenteriae serotype 1 (strain Sd197).